The chain runs to 339 residues: Anthranilate phosphoribosyltransferase (339 aa).

Residues Gly81, Gly84–Asp85, Ser89, Asn91–Ser94, Lys109–Ser117, and Ala121 contribute to the 5-phospho-alpha-D-ribose 1-diphosphate site. Gly81 provides a ligand contact to anthranilate. Ser93 is a binding site for Mg(2+). An anthranilate-binding site is contributed by Asn112. Arg167 contacts anthranilate. Mg(2+)-binding residues include Asp225 and Glu226.

Belongs to the anthranilate phosphoribosyltransferase family. Homodimer. Mg(2+) serves as cofactor.

It carries out the reaction N-(5-phospho-beta-D-ribosyl)anthranilate + diphosphate = 5-phospho-alpha-D-ribose 1-diphosphate + anthranilate. It participates in amino-acid biosynthesis; L-tryptophan biosynthesis; L-tryptophan from chorismate: step 2/5. Functionally, catalyzes the transfer of the phosphoribosyl group of 5-phosphorylribose-1-pyrophosphate (PRPP) to anthranilate to yield N-(5'-phosphoribosyl)-anthranilate (PRA). In Brucella canis (strain ATCC 23365 / NCTC 10854 / RM-666), this protein is Anthranilate phosphoribosyltransferase.